Reading from the N-terminus, the 231-residue chain is Probable transglycosylase SceD (231 aa).

An N-terminal signal peptide occupies residues 1 to 27 (MKKTLLASSLAVGLGIVAGNAGHEAQA). Positions 92 to 153 (MSAQAPATNN…ESKASEGSSV (62 aa)) are disordered. A compositionally biased stretch (polar residues) spans 96–116 (APATNNVAPSADQSNQVQSQE). Positions 119–137 (APQNAQTQQPQASTSNNSQ) are enriched in low complexity. A compositionally biased stretch (polar residues) spans 138–153 (VTATPTESKASEGSSV).

Belongs to the transglycosylase family. SceD subfamily.

It localises to the secreted. Functionally, is able to cleave peptidoglycan and affects clumping and separation of bacterial cells. This chain is Probable transglycosylase SceD (sceD), found in Staphylococcus aureus (strain MRSA252).